Here is a 788-residue protein sequence, read N- to C-terminus: DNA ligase (788 aa).

NAD(+) is bound by residues 35–39 (DAEYD), 84–85 (SL), and Glu-124. Lys-126 serves as the catalytic N6-AMP-lysine intermediate. NAD(+) is bound by residues Arg-147, Glu-184, Lys-300, and Lys-324. Zn(2+)-binding residues include Cys-418, Cys-421, Cys-448, and Cys-454. A BRCT domain is found at 707–788 (AEGLPLAGQT…FIERLAQLGS (82 aa)).

This sequence belongs to the NAD-dependent DNA ligase family. LigA subfamily. Mg(2+) serves as cofactor. It depends on Mn(2+) as a cofactor.

It catalyses the reaction NAD(+) + (deoxyribonucleotide)n-3'-hydroxyl + 5'-phospho-(deoxyribonucleotide)m = (deoxyribonucleotide)n+m + AMP + beta-nicotinamide D-nucleotide.. In terms of biological role, DNA ligase that catalyzes the formation of phosphodiester linkages between 5'-phosphoryl and 3'-hydroxyl groups in double-stranded DNA using NAD as a coenzyme and as the energy source for the reaction. It is essential for DNA replication and repair of damaged DNA. In Stutzerimonas stutzeri (strain A1501) (Pseudomonas stutzeri), this protein is DNA ligase.